A 615-amino-acid chain; its full sequence is Putative DNA ligase 205R (615 aa).

The active-site N6-AMP-lysine intermediate is the K101.

This sequence belongs to the NAD-dependent DNA ligase family.

The enzyme catalyses NAD(+) + (deoxyribonucleotide)n-3'-hydroxyl + 5'-phospho-(deoxyribonucleotide)m = (deoxyribonucleotide)n+m + AMP + beta-nicotinamide D-nucleotide.. Its function is as follows. Catalyzes the formation of phosphodiester linkages between 5'-phosphoryl and 3'-hydroxyl groups in double-stranded DNA using NAD as a coenzyme and as the energy source for the reaction. The sequence is that of Putative DNA ligase 205R from Invertebrate iridescent virus 6 (IIV-6).